The following is a 704-amino-acid chain: Elongation factor G (704 aa).

A tr-type G domain is found at 8–291 (DKVRNIGIMA…AVVEYLASPV (284 aa)). GTP-binding positions include 17-24 (AHIDAGKT), 90-94 (DTPGH), and 144-147 (NKMD).

Belongs to the TRAFAC class translation factor GTPase superfamily. Classic translation factor GTPase family. EF-G/EF-2 subfamily.

The protein resides in the cytoplasm. Its function is as follows. Catalyzes the GTP-dependent ribosomal translocation step during translation elongation. During this step, the ribosome changes from the pre-translocational (PRE) to the post-translocational (POST) state as the newly formed A-site-bound peptidyl-tRNA and P-site-bound deacylated tRNA move to the P and E sites, respectively. Catalyzes the coordinated movement of the two tRNA molecules, the mRNA and conformational changes in the ribosome. This is Elongation factor G from Pelodictyon phaeoclathratiforme (strain DSM 5477 / BU-1).